Consider the following 471-residue polypeptide: Sulfate adenylyltransferase subunit 1 (471 aa).

Residues 22–237 (KELLRFLTCG…LESVQITGAK (216 aa)) form the tr-type G domain. Positions 31–38 (GSVDDGKS) are G1. 31–38 (GSVDDGKS) lines the GTP pocket. The tract at residues 89 to 93 (GITID) is G2. The interval 110 to 113 (DTPG) is G3. GTP-binding positions include 110 to 114 (DTPGH) and 165 to 168 (NKMD). A G4 region spans residues 165–168 (NKMD). The G5 stretch occupies residues 202–204 (SAL).

It belongs to the TRAFAC class translation factor GTPase superfamily. Classic translation factor GTPase family. CysN/NodQ subfamily. In terms of assembly, heterodimer composed of CysD, the smaller subunit, and CysN.

It catalyses the reaction sulfate + ATP + H(+) = adenosine 5'-phosphosulfate + diphosphate. Its pathway is sulfur metabolism; hydrogen sulfide biosynthesis; sulfite from sulfate: step 1/3. In terms of biological role, with CysD forms the ATP sulfurylase (ATPS) that catalyzes the adenylation of sulfate producing adenosine 5'-phosphosulfate (APS) and diphosphate, the first enzymatic step in sulfur assimilation pathway. APS synthesis involves the formation of a high-energy phosphoric-sulfuric acid anhydride bond driven by GTP hydrolysis by CysN coupled to ATP hydrolysis by CysD. The protein is Sulfate adenylyltransferase subunit 1 of Saccharophagus degradans (strain 2-40 / ATCC 43961 / DSM 17024).